The primary structure comprises 421 residues: MPFLHGFRRIIFEYQPLVDAILGSLGIQDPERQESLDRPSYVASEESRILVLTELLERKAHSPFYQEGVSNALLKMAELGLTRAADVLLRHGANLNFEDPVTYYTALHIAVLRNQPDMVELLVHHGADVNRRDRIHESSPLDLASEEPERLPCLQRLLDLGADVNAADKHGKTALLHALASSDGVQIHNTENIRLLLEGGADVKATTKDGDTVFTCIIFLLGETVGGDKEEAQMINRFCFQVTRLLLAHGADPSECPAHESLTHICLKSFKLHFPLLRFLLESGAAYNCSLHGASCWSGFHIIFERLCSHPGCTEDESHADLLRKAETVLDLMVTNSQKLQLPENFDIHPVGSLAEKIQALHFSLRQLESYPPPLKHLCRVAIRLYLQPWPVDVKVKALPLPDRLKWYLLSEHSGSVEDDI.

ANK repeat units follow at residues 67-97 (EGVS…NLNF), 102-131 (TYYT…DVNR), 136-166 (HESS…DVNA), 170-205 (HGKT…DVKA), 226-255 (GGDK…DPSE), and 260-289 (ESLT…AYNC). The 56-residue stretch at 360 to 415 (ALHFSLRQLESYPPPLKHLCRVAIRLYLQPWPVDVKVKALPLPDRLKWYLLSEHSG) folds into the SOCS box domain.

The protein belongs to the ankyrin SOCS box (ASB) family. Binds APS. Identified in a complex with ELOB and ELOC. Interacts with CUL5 and RNF7. Interacts with SQSTM1. Post-translationally, ubiquitinated by RNF41; leading to proteasomal degradation.

The protein localises to the cytoplasm. The protein operates within protein modification; protein ubiquitination. In terms of biological role, probable substrate-recognition component of a SCF-like ECS (Elongin-Cullin-SOCS-box protein) E3 ubiquitin-protein ligase complex which mediates the ubiquitination and subsequent proteasomal degradation of target proteins. May play a role in the regulation of cell proliferation and autophagy by promoting the ubiquitination and degradation of SQSTM1. This Homo sapiens (Human) protein is Ankyrin repeat and SOCS box protein 6 (ASB6).